The following is a 331-amino-acid chain: Ferrochelatase (331 aa).

Positions 187 and 286 each coordinate Fe cation.

The protein belongs to the ferrochelatase family.

It localises to the cytoplasm. The catalysed reaction is heme b + 2 H(+) = protoporphyrin IX + Fe(2+). It functions in the pathway porphyrin-containing compound metabolism; protoheme biosynthesis; protoheme from protoporphyrin-IX: step 1/1. Catalyzes the ferrous insertion into protoporphyrin IX. In Legionella pneumophila (strain Lens), this protein is Ferrochelatase.